The primary structure comprises 276 residues: NADPH-dependent 7-cyano-7-deazaguanine reductase (276 aa).

Substrate is bound at residue 83 to 85 (IES). 85 to 86 (SK) is an NADPH binding site. The Thioimide intermediate role is filled by Cys184. Asp191 serves as the catalytic Proton donor. Position 223–224 (223–224 (HE)) interacts with substrate. An NADPH-binding site is contributed by 252–253 (RG).

Belongs to the GTP cyclohydrolase I family. QueF type 2 subfamily. As to quaternary structure, homodimer.

The protein resides in the cytoplasm. It catalyses the reaction 7-aminomethyl-7-carbaguanine + 2 NADP(+) = 7-cyano-7-deazaguanine + 2 NADPH + 3 H(+). It functions in the pathway tRNA modification; tRNA-queuosine biosynthesis. Functionally, catalyzes the NADPH-dependent reduction of 7-cyano-7-deazaguanine (preQ0) to 7-aminomethyl-7-deazaguanine (preQ1). The sequence is that of NADPH-dependent 7-cyano-7-deazaguanine reductase from Pseudomonas putida (strain ATCC 47054 / DSM 6125 / CFBP 8728 / NCIMB 11950 / KT2440).